Consider the following 225-residue polypeptide: Platelet-activating factor acetylhydrolase IB subunit beta homolog (225 aa).

It belongs to the 'GDSL' lipolytic enzyme family. Platelet-activating factor acetylhydrolase IB beta/gamma subunits subfamily. Does not interact with Lis-1.

The chain is Platelet-activating factor acetylhydrolase IB subunit beta homolog (Paf-AHalpha) from Drosophila melanogaster (Fruit fly).